A 244-amino-acid polypeptide reads, in one-letter code: 1-(5-phosphoribosyl)-5-[(5-phosphoribosylamino)methylideneamino] imidazole-4-carboxamide isomerase (244 aa).

D10 (proton acceptor) is an active-site residue. The active-site Proton donor is D132.

The protein belongs to the HisA/HisF family.

The protein resides in the cytoplasm. It catalyses the reaction 1-(5-phospho-beta-D-ribosyl)-5-[(5-phospho-beta-D-ribosylamino)methylideneamino]imidazole-4-carboxamide = 5-[(5-phospho-1-deoxy-D-ribulos-1-ylimino)methylamino]-1-(5-phospho-beta-D-ribosyl)imidazole-4-carboxamide. It participates in amino-acid biosynthesis; L-histidine biosynthesis; L-histidine from 5-phospho-alpha-D-ribose 1-diphosphate: step 4/9. The protein is 1-(5-phosphoribosyl)-5-[(5-phosphoribosylamino)methylideneamino] imidazole-4-carboxamide isomerase of Stenotrophomonas maltophilia (strain K279a).